The chain runs to 338 residues: Tetraacyldisaccharide 4'-kinase (338 aa).

51-58 (HLGGAGKT) contributes to the ATP binding site.

This sequence belongs to the LpxK family.

It carries out the reaction a lipid A disaccharide + ATP = a lipid IVA + ADP + H(+). It functions in the pathway glycolipid biosynthesis; lipid IV(A) biosynthesis; lipid IV(A) from (3R)-3-hydroxytetradecanoyl-[acyl-carrier-protein] and UDP-N-acetyl-alpha-D-glucosamine: step 6/6. In terms of biological role, transfers the gamma-phosphate of ATP to the 4'-position of a tetraacyldisaccharide 1-phosphate intermediate (termed DS-1-P) to form tetraacyldisaccharide 1,4'-bis-phosphate (lipid IVA). This is Tetraacyldisaccharide 4'-kinase from Rhodopseudomonas palustris (strain BisB5).